The primary structure comprises 1048 residues: Self-sufficient cytochrome P450 monooxygenase CYP505E4 (1048 aa).

Cysteine 405 is a heme binding site. The Flavodoxin-like domain occupies 499–640 (VSFFYGSNSG…DLEVWEETNL (142 aa)). Residues 505–509 (SNSGT) and 584–616 (VFGCGHQDWTKTFYRIPILIDNLMYKAGATRLA) each bind FMN. Residues 678-906 (RDLIEAKVTA…RPAKDAFHLP (229 aa)) enclose the FAD-binding FR-type domain.

It in the N-terminal section; belongs to the cytochrome P450 family. It depends on FAD as a cofactor. FMN serves as cofactor. Requires heme as cofactor.

The catalysed reaction is 2 oxidized [cytochrome P450] + NADPH = 2 reduced [cytochrome P450] + NADP(+) + H(+). It catalyses the reaction an organic molecule + reduced [NADPH--hemoprotein reductase] + O2 = an alcohol + oxidized [NADPH--hemoprotein reductase] + H2O + H(+). It carries out the reaction dodecanoate + reduced [NADPH--hemoprotein reductase] + O2 = 5-hydroxydodecanoate + oxidized [NADPH--hemoprotein reductase] + H2O + H(+). The enzyme catalyses tetradecanoate + reduced [NADPH--hemoprotein reductase] + O2 = 7-hydroxytetradecanoate + oxidized [NADPH--hemoprotein reductase] + H2O + H(+). The catalysed reaction is dodecan-1-ol + reduced [NADPH--hemoprotein reductase] + O2 = 1,5-dodecanediol + oxidized [NADPH--hemoprotein reductase] + H2O + H(+). It catalyses the reaction dodecan-1-ol + reduced [NADPH--hemoprotein reductase] + O2 = 1,4-dodecanediol + oxidized [NADPH--hemoprotein reductase] + H2O + H(+). It carries out the reaction dodecan-1-ol + reduced [NADPH--hemoprotein reductase] + O2 = 1,6-dodecanediol + oxidized [NADPH--hemoprotein reductase] + H2O + H(+). Its function is as follows. Self-sufficient cytochrome P450 monooxygenase that catalyzes the regioselective in-chain hydroxylation of alkanes, fatty alcohols, and fatty acids at the omega-7 position. Performs hydroxylation of C10-C16 n-alkanes and C12 and C14 fatty alcohols; and thereby enables the one step biocatalytic synthesis of rare alcohols such as 5-dodecanol and 7-tetradecanol. Converts 1-dodecanol into 1,5-dodecanediol as major product with very little sub-terminally hydroxylated products with the 1,4-dodecanediol and 1,6-dodecanediol more abundant. Converts dodecanoic acid to 5-hydroxydodecanoic acid which can be further converted into delta-dodecalactone by lactonization of the 5-hydroxy acid at low pH. Also gives sub-terminal hydroxylation of dodecanoic acid with 9-hydroxydodecanoic acid being the second most abundant product. The protein is Self-sufficient cytochrome P450 monooxygenase CYP505E4 of Penicillium expansum (Blue mold rot fungus).